The sequence spans 289 residues: Pantothenate synthetase (289 aa).

30–37 (MGNLHEGH) contacts ATP. H37 serves as the catalytic Proton donor. (R)-pantoate is bound at residue Q61. Q61 contacts beta-alanine. 149 to 152 (GEKD) contacts ATP. Residue Q155 participates in (R)-pantoate binding. ATP is bound at residue 186–189 (MSSR).

The protein belongs to the pantothenate synthetase family. Homodimer.

The protein resides in the cytoplasm. The enzyme catalyses (R)-pantoate + beta-alanine + ATP = (R)-pantothenate + AMP + diphosphate + H(+). The protein operates within cofactor biosynthesis; (R)-pantothenate biosynthesis; (R)-pantothenate from (R)-pantoate and beta-alanine: step 1/1. Its function is as follows. Catalyzes the condensation of pantoate with beta-alanine in an ATP-dependent reaction via a pantoyl-adenylate intermediate. This chain is Pantothenate synthetase, found in Psychromonas ingrahamii (strain DSM 17664 / CCUG 51855 / 37).